The chain runs to 798 residues: Palmitoyl thioesterase CPT1C (798 aa).

At 1 to 52 (MAEAHQASSLLSSLSSDGAEVELSSPVWQEIYLCALRSWKRHLWRVWNDFLA) the chain is on the cytoplasmic side. Residues 53–75 (GVVPATPLSWLFLFSTIQLACLL) traverse the membrane as a helical segment. Residues 76-103 (QLDPSLGLMEKIKELLPDWGGQHHQLQG) lie on the Lumenal side of the membrane. A helical transmembrane segment spans residues 104 to 126 (FLSAAVFASCLWGALIFTLHVAL). At 127–798 (RLLLSHHGWL…PNTPTSSTNL (672 aa)) the chain is on the cytoplasmic side. H469 functions as the Proton acceptor in the catalytic mechanism. 551-563 (GKSFIKCCHVSSD) provides a ligand contact to CoA. 3 residues coordinate (R)-carnitine: Y585, S587, and T598. The segment at 759–798 (LFRVGQHFKRQFRGENSDYRYNFLSCKTVDPNTPTSSTNL) is required for interaction with GRIA1.

It belongs to the carnitine/choline acetyltransferase family. As to quaternary structure, peripherally associated with AMPAR complex. AMPAR complex consists of an inner core made of 4 pore-forming GluA/GRIA proteins (GRIA1, GRIA2, GRIA3 and GRIA4) and 4 major auxiliary subunits arranged in a twofold symmetry. One of the two pairs of distinct binding sites is occupied either by CNIH2, CNIH3 or CACNG2, CACNG3. The other harbors CACNG2, CACNG3, CACNG4, CACNG8 or GSG1L. This inner core of AMPAR complex is complemented by outer core constituents binding directly to the GluA/GRIA proteins at sites distinct from the interaction sites of the inner core constituents. Outer core constituents include at least PRRT1, PRRT2, CKAMP44/SHISA9, FRRS1L and NRN1. The proteins of the inner and outer core serve as a platform for other, more peripherally associated AMPAR constituents, including CPT1C. Alone or in combination, these auxiliary subunits control the gating and pharmacology of the AMPAR complex and profoundly impact their biogenesis and protein processing. Interacts with SACM1L; the interaction regulates SACM1L phosphatidylinositol-3-phosphatase activity and translocation to endoplasmic reticulum/trans Golgi network in a malonyl-CoA dependent manner. Interacts with ATL1. Predominantly expressed in brain (at protein level) and testis, highly expressed in the hippocampus, amygdala and cerebellum. Expressed in neurons but not astrocytes. Expressed in the ventral horn from spinal cords.

The protein localises to the synapse. The protein resides in the cell projection. Its subcellular location is the axon. It localises to the dendrite. It is found in the dendritic spine. The protein localises to the endoplasmic reticulum membrane. The catalysed reaction is S-hexadecanoyl-L-cysteinyl-[protein] + H2O = L-cysteinyl-[protein] + hexadecanoate + H(+). Its function is as follows. Palmitoyl thioesterase specifically expressed in the endoplasmic reticulum of neurons. Modulates the trafficking of the glutamate receptor, AMPAR, to plasma membrane through depalmitoylation of GRIA1. Also regulates AMPR trafficking through the regulation of SACM1L phosphatidylinositol-3-phosphatase activity by interaction in a malonyl-CoA dependent manner. Binds malonyl-CoA and couples malonyl-CoA to ceramide levels, necessary for proper spine maturation and contributing to systemic energy homeostasis and appetite control. Binds to palmitoyl-CoA, but does not have carnitine palmitoyltransferase 1 catalytic activity or at very low levels. The polypeptide is Palmitoyl thioesterase CPT1C (Cpt1c) (Mus musculus (Mouse)).